A 921-amino-acid polypeptide reads, in one-letter code: Sodium/calcium exchanger 2 (921 aa).

An N-terminal signal peptide occupies residues 1-20 (MAPLALVGVALLLGAPHCLG). The Extracellular portion of the chain corresponds to 21–68 (EATPTPSLPPPPANDSDASPGGCQGSYRCQPGVLLPVWEPDDPSLGDK). Residues 23 to 42 (TPTPSLPPPPANDSDASPGG) form a disordered region. Asparagine 34 carries N-linked (GlcNAc...) asparagine glycosylation. A helical membrane pass occupies residues 69 to 90 (AARAVVYFVAMVYMFLGLSIIA). Residues 91–130 (DRFMASIEVITSKEKEITITKANGETSVGTVRIWNETVSN) lie on the Cytoplasmic side of the membrane. Residues 131–152 (LTLMALGSSAPEILLSVIEVCG) traverse the membrane as a helical segment. One copy of the Alpha-1 repeat lies at 135–175 (ALGSSAPEILLSVIEVCGHNFQAGELGPGTIVGSAAFNMFV). Topologically, residues 153 to 164 (HNFQAGELGPGT) are extracellular. A helical membrane pass occupies residues 165 to 185 (IVGSAAFNMFVVIAVCVYVIP). At 186 to 196 (AGESRKIKHLR) the chain is on the cytoplasmic side. Residues 197 to 219 (VFFVTASWSIFAYVWLYLILAVF) traverse the membrane as a helical segment. The Extracellular portion of the chain corresponds to 220–222 (SPG). Residues 223 to 246 (VVQVWEALLTLVFFPVCVVFAWMA) traverse the membrane as a helical segment. Over 247–720 (DKRLLFYKYV…DGSREERLPS (474 aa)) the chain is Cytoplasmic. The interval 248 to 267 (KRLLFYKYVYKRYRTDPRSG) is putative calmodulin-binding region. The disordered stretch occupies residues 372 to 391 (AADAARRPGANDGAPDDEDD). Calx-beta domains follow at residues 384-483 (GAPD…VRLL) and 512-612 (ATVT…IELG). Ca(2+) contacts are provided by glutamate 407, aspartate 443, aspartate 468, aspartate 469, isoleucine 471, glutamate 473, glutamate 476, aspartate 518, aspartate 519, aspartate 520, glutamate 536, aspartate 598, glutamate 599, and glutamate 600. Position 622 is a phosphoserine (serine 622). Glutamate 665 is a binding site for Ca(2+). Residues 721–740 (CFDYVMHFLTVFWKVLFACL) traverse the membrane as a helical segment. Over 741–747 (PPTEYCH) the chain is Extracellular. Residues 748–770 (GWACFGVCILVIGLLTALIGDLA) form a helical membrane-spanning segment. The Cytoplasmic segment spans residues 771 to 772 (SH). A helical membrane pass occupies residues 773 to 791 (FGCTVGLKDSVNAVVFVAL). The Alpha-2 repeat unit spans residues 790–826 (ALGTSIPDTFASKVAALQDQCADASIGNVTGSNAVNV). The Extracellular portion of the chain corresponds to 792 to 822 (GTSIPDTFASKVAALQDQCADASIGNVTGSN). Residue asparagine 817 is glycosylated (N-linked (GlcNAc...) asparagine). A helical membrane pass occupies residues 823–843 (AVNVFLGLGVAWSVAAVYWAV). The Cytoplasmic segment spans residues 844-854 (QGRPFEVRTGT). Residues 855–875 (LAFSVTLFTVFAFVGIAVLLY) traverse the membrane as a helical segment. The Extracellular segment spans residues 876 to 892 (RRRPHIGGELGGPRGPK). The chain crosses the membrane as a helical span at residues 893–909 (LATTALFLGLWFLYILF). The Cytoplasmic portion of the chain corresponds to 910–921 (ASLEAYCHIRGF).

The protein belongs to the Ca(2+):cation antiporter (CaCA) (TC 2.A.19) family. SLC8 subfamily. In terms of tissue distribution, detected in neocortex and hippocampus on pyramidal cells, astrocyte processes and dendrites (at protein level). Brain and skeletal muscle.

The protein localises to the cell membrane. The protein resides in the basolateral cell membrane. It is found in the perikaryon. It localises to the cell projection. Its subcellular location is the dendrite. The protein localises to the dendritic spine. It catalyses the reaction Ca(2+)(in) + 3 Na(+)(out) = Ca(2+)(out) + 3 Na(+)(in). Its activity is regulated as follows. Calcium transport is down-regulated by Na(+) and stimulated by Ca(2+). Mediates the electrogenic exchange of Ca(2+) against Na(+) ions across the cell membrane, and thereby contributes to the regulation of cytoplasmic Ca(2+) levels and Ca(2+)-dependent cellular processes. Contributes to cellular Ca(2+) homeostasis in excitable cells. Contributes to the rapid decrease of cytoplasmic Ca(2+) levels back to baseline after neuronal activation, and thereby contributes to modulate synaptic plasticity, learning and memory. Plays a role in regulating urinary Ca(2+) and Na(+) excretion. The chain is Sodium/calcium exchanger 2 (Slc8a2) from Rattus norvegicus (Rat).